The following is a 342-amino-acid chain: AA9 family lytic polysaccharide monooxygenase H (342 aa).

The signal sequence occupies residues 1-19 (MSKASALLAGLTGAALVAA). H20 and H106 together coordinate Cu(2+). Cystine bridges form between C75/C195 and C117/C121. Residues H181 and Q190 each coordinate O2. Cu(2+) is bound at residue Y192. The tract at residues 263–308 (ATVPGGGGANPTATTTAATSAAPSTTLRTTTTSAAQTTAPPSGDVQ) is disordered. Positions 272 to 305 (NPTATTTAATSAAPSTTLRTTTTSAAQTTAPPSG) are enriched in low complexity. The CBM1 domain maps to 306–342 (DVQTKYGQCGGNGWTGPTVCAPGSSCSVLNEWYSQCL).

It belongs to the polysaccharide monooxygenase AA9 family. Cu(2+) serves as cofactor.

The protein localises to the secreted. The enzyme catalyses [(1-&gt;4)-beta-D-glucosyl]n+m + reduced acceptor + O2 = 4-dehydro-beta-D-glucosyl-[(1-&gt;4)-beta-D-glucosyl]n-1 + [(1-&gt;4)-beta-D-glucosyl]m + acceptor + H2O.. With respect to regulation, the presence of lignin presents a significant source of antioxidants, which probably increase the activity by trapping liberated oxidized fragments. Functionally, lytic polysaccharide monooxygenase (LPMO) that depolymerizes crystalline and amorphous polysaccharides via the oxidation of scissile alpha- or beta-(1-4)-glycosidic bonds, yielding C1 or C4 oxidation products. Catalysis by LPMOs requires the reduction of the active-site copper from Cu(II) to Cu(I) by a reducing agent and H(2)O(2) or O(2) as a cosubstrate. Hydrolyzes weakly barley beta-glucan, carboxymethyl cellulose, lichenan, wheat arabinoxylan and birchwood xylan. Stimulates the hydrolysis of lignocellulosic substrates (such as hydrothermal pretreated wheat straw or steam-pretreated spruce), when combined with other cellulolytic enzymes. The polypeptide is AA9 family lytic polysaccharide monooxygenase H (Thermothelomyces thermophilus (strain ATCC 42464 / BCRC 31852 / DSM 1799) (Sporotrichum thermophile)).